The primary structure comprises 231 residues: Protein OPG061 (231 aa).

It belongs to the orthopoxvirus OPG058 family.

The protein localises to the host nucleus. Its subcellular location is the host nucleolus. The sequence is that of Protein OPG061 (OPG061) from Cynomys gunnisoni (Gunnison's prairie dog).